Reading from the N-terminus, the 137-residue chain is MTHDSLSPVAAPAVHSGDALARLAAVIESRKPANGGDADKSYVARLLHKGPDAFLKKIGEEATEVVMAAKDVDHGADASKLVYEVADLWFHSMIALAHYGLAPADVVAELERREGTSGIEEKALRKSLQRAAEEAQP.

Over residues glutamate 114–leucine 124 the composition is skewed to basic and acidic residues. The disordered stretch occupies residues glutamate 114 to proline 137.

This sequence belongs to the PRA-PH family.

The protein localises to the cytoplasm. The enzyme catalyses 1-(5-phospho-beta-D-ribosyl)-ATP + H2O = 1-(5-phospho-beta-D-ribosyl)-5'-AMP + diphosphate + H(+). Its pathway is amino-acid biosynthesis; L-histidine biosynthesis; L-histidine from 5-phospho-alpha-D-ribose 1-diphosphate: step 2/9. This Paracidovorax citrulli (strain AAC00-1) (Acidovorax citrulli) protein is Phosphoribosyl-ATP pyrophosphatase.